A 143-amino-acid polypeptide reads, in one-letter code: Putative 2'-deoxynucleoside 5'-phosphate N-hydrolase 1 (143 aa).

Residues His37, Glu82, and 106-108 (SAM) contribute to the substrate site.

The protein belongs to the 2'-deoxynucleoside 5'-phosphate N-hydrolase 1 family. As to quaternary structure, monomer and homodimer.

The enzyme catalyses a pyrimidine 2'-deoxyribonucleoside 5'-phosphate + H2O = a pyrimidine nucleobase + 2-deoxy-D-ribose 5-phosphate. It catalyses the reaction a purine 2'-deoxyribonucleoside 5'-phosphate + H2O = a purine nucleobase + 2-deoxy-D-ribose 5-phosphate. Catalyzes the cleavage of the N-glycosidic bond of deoxyribonucleoside 5'-monophosphates to yield deoxyribose 5-phosphate and a purine or pyrimidine base. This chain is Putative 2'-deoxynucleoside 5'-phosphate N-hydrolase 1, found in Thermofilum pendens (strain DSM 2475 / Hrk 5).